The primary structure comprises 383 residues: MSVECSGELFFYPPFTTMSKELISVHNPNPEPVIFKVKTTAPKHYCVRPNSGKIEPKSTVNVQVLLQAMKEEPAPDFKCRDKFLIQSMAIGDADTSNVENYHEFWTEMEKQGRSIFDRKIRCVYSTKQPPQSADKQVENTSTSNPPVSVEGSENLASSVGGPTAVGVSLDEAQNDFNGAKDHLSNGVNTVVPDSTFRSTFESAQIPDASVVQTVVTDADNGAASVKDTIVTAESASSKGADVARSKVQDIIDNEIPKPSESPRRSVSSTPPVHPPPPVPQNLSAVNEEFDTKKNDFDSKLPESTPAVEKVSENLGSETRESLQGAKPAAGAHSSDNALEQIKPSYSADPSSSTGASLTESPGIPPNIVIILCLIFFLIGYLFF.

Residues 1–123 (MSVECSGELF…SIFDRKIRCV (123 aa)) enclose the MSP domain. At 1-362 (MSVECSGELF…TGASLTESPG (362 aa)) the chain is on the cytoplasmic side. Residues 127–146 (KQPPQSADKQVENTSTSNPP) are compositionally biased toward polar residues. 2 disordered regions span residues 127-160 (KQPP…SSVG) and 233-359 (ESAS…SLTE). Phosphoserine occurs at positions 236, 237, 259, 261, and 268. Basic and acidic residues predominate over residues 241 to 263 (DVARSKVQDIIDNEIPKPSESPR). A compositionally biased stretch (basic and acidic residues) spans 289–300 (FDTKKNDFDSKL). The segment covering 347–359 (ADPSSSTGASLTE) has biased composition (polar residues). Residues 363–383 (IPPNIVIILCLIFFLIGYLFF) traverse the membrane as a helical; Anchor for type IV membrane protein segment.

This sequence belongs to the VAMP-associated protein (VAP) (TC 9.B.17) family. In terms of assembly, interacts (via MSP domain) with duc1 (via FFAT-motif); the interaction is direct and serves to restrict the localization of duc1 to areas of cell membrane-endoplasmic reticulum contact sites, and away from the cell division site. Interacts with epr1.

The protein localises to the endoplasmic reticulum membrane. Its function is as follows. Vesicle-associated membrane protein-associated protein (VAP) implicated in maintaining the cortical endoplasmic reticulum (ER)-plasma membrane (PM) attachment. ER-PM contacts function to modulate the distribution of contractile ring components to ensure robust ring assembly. ER-PM contacts function also in controlling exocytosis and maintenance of cell polarity regulating cell shape. VAPs play an important role in regulating eisosome assembly. VAPs also contribute to ER-phagy by tethering atg8 to the ER membrane, but also by maintaining the ER-plasma membrane contact. Restricts the localization of duc1 away from the site of cell division. The protein is Vesicle-associated membrane protein-associated protein scs2 (scs2) of Schizosaccharomyces pombe (strain 972 / ATCC 24843) (Fission yeast).